The following is a 343-amino-acid chain: Anthranilate phosphoribosyltransferase (343 aa).

Residues Gly-84, 87–88 (GD), Thr-92, 94–97 (NIST), 112–120 (KHGNRGVSS), and Ser-124 each bind 5-phospho-alpha-D-ribose 1-diphosphate. Position 84 (Gly-84) interacts with anthranilate. Ser-96 contacts Mg(2+). Asn-115 is an anthranilate binding site. Arg-170 contributes to the anthranilate binding site. Residues Asp-229 and Glu-230 each contribute to the Mg(2+) site.

The protein belongs to the anthranilate phosphoribosyltransferase family. In terms of assembly, homodimer. Requires Mg(2+) as cofactor.

The catalysed reaction is N-(5-phospho-beta-D-ribosyl)anthranilate + diphosphate = 5-phospho-alpha-D-ribose 1-diphosphate + anthranilate. It functions in the pathway amino-acid biosynthesis; L-tryptophan biosynthesis; L-tryptophan from chorismate: step 2/5. Catalyzes the transfer of the phosphoribosyl group of 5-phosphorylribose-1-pyrophosphate (PRPP) to anthranilate to yield N-(5'-phosphoribosyl)-anthranilate (PRA). The chain is Anthranilate phosphoribosyltransferase from Burkholderia multivorans (strain ATCC 17616 / 249).